The chain runs to 490 residues: Cytochrome P450 2C39 (490 aa).

The N-terminal stretch at 1–25 (MDLVTFLVLTLSSLILLSLWRQSCG) is a signal peptide. Cys-435 contacts heme.

The protein belongs to the cytochrome P450 family. Heme is required as a cofactor. Liver.

It localises to the endoplasmic reticulum membrane. It is found in the microsome membrane. The catalysed reaction is an organic molecule + reduced [NADPH--hemoprotein reductase] + O2 = an alcohol + oxidized [NADPH--hemoprotein reductase] + H2O + H(+). It carries out the reaction (5Z,8Z,11Z,14Z)-eicosatetraenoate + reduced [NADPH--hemoprotein reductase] + O2 = 11,12-epoxy-(5Z,8Z,14Z)-eicosatrienoate + oxidized [NADPH--hemoprotein reductase] + H2O + H(+). It catalyses the reaction (5Z,8Z,11Z,14Z)-eicosatetraenoate + reduced [NADPH--hemoprotein reductase] + O2 = 14,15-epoxy-(5Z,8Z,11Z)-eicosatrienoate + oxidized [NADPH--hemoprotein reductase] + H2O + H(+). Its pathway is lipid metabolism; arachidonate metabolism. A cytochrome P450 monooxygenase that primarily catalyzes the epoxidation of 11,12 and 14,15 double bonds of (5Z,8Z,11Z,14Z)-eicosatetraenoic acid (arachidonate) forming 11,12- and 14,15-epoxyeicosatrienoic acids (11,12- and 14,15-EET) regioisomers. Mechanistically, uses molecular oxygen inserting one oxygen atom into a substrate, and reducing the second into a water molecule, with two electrons provided by NADPH via cytochrome P450 reductase (CPR; NADPH--hemoprotein reductase). The protein is Cytochrome P450 2C39 of Mus musculus (Mouse).